The following is a 102-amino-acid chain: RNA-binding protein Hfq (102 aa).

One can recognise a Sm domain in the interval 9–68 (DPFLNALRRERVPVSIYLVNGIKLQGQIESFDQFVILLKNTVSQMVYKHAISTVVPSRPV). The interval 63 to 102 (VPSRPVSHHSNNAGGGTSSNYHHGSSPQNTSAQQDSEETE) is disordered. Residues 70-96 (HHSNNAGGGTSSNYHHGSSPQNTSAQQ) show a composition bias toward polar residues.

It belongs to the Hfq family. Homohexamer.

Its function is as follows. RNA chaperone that binds small regulatory RNA (sRNAs) and mRNAs to facilitate mRNA translational regulation in response to envelope stress, environmental stress and changes in metabolite concentrations. Also binds with high specificity to tRNAs. This chain is RNA-binding protein Hfq, found in Shigella dysenteriae serotype 1 (strain Sd197).